Consider the following 172-residue polypeptide: Transcription factor MafF (172 aa).

The interval R51–K76 is basic motif. Positions R51–L114 constitute a bZIP domain. The tract at residues L79–L93 is leucine-zipper. The segment at V140–S172 is disordered. Residues S145 to S172 are compositionally biased toward pro residues.

Belongs to the bZIP family. Maf subfamily. In terms of assembly, monomer and homo- or heterodimer. Interacts with MIP. Forms high affinity heterodimers with members of the CNC-bZIP family such as NFE2L1/NRF1.

It localises to the nucleus. In terms of biological role, since they lack a putative transactivation domain, the small Mafs behave as transcriptional repressors when they dimerize among themselves. However, they seem to serve as transcriptional activators by dimerizing with other (usually larger) basic-zipper proteins, such as NFE2L1/NRF1, and recruiting them to specific DNA-binding sites. Interacts with the upstream promoter region of the oxytocin receptor gene. May be a transcriptional enhancer in the up-regulation of the oxytocin receptor gene at parturition. This Bos taurus (Bovine) protein is Transcription factor MafF (MAFF).